Reading from the N-terminus, the 453-residue chain is Folate transporter 1 (453 aa).

Asn-36 carries an N-linked (GlcNAc...) asparagine glycan. 5 helical membrane-spanning segments follow: residues 48–68 (PYWTYSYMLALIPMFILTDIL), 73–93 (IVMIEAIGLVATWALLVFGKG), 102–122 (VSFGVASAAEIAYYSYIYSIV), 136–156 (AAALMGKLVAFGLGQTLISTH), and 161–181 (LVLNQISLGAVCLVTIIAIFL). N-linked (GlcNAc...) asparagine glycosylation is present at Asn-260. The next 5 helical transmembrane spans lie at 276–296 (VANGVVEFVNTALGAFLSLFI), 306–326 (HGQMILFITSAIVAVLLYLCS), 331–351 (VLVAYSSYVVITSIYHMLITA), 368–388 (IFGCNTFVAVCLQSLLTLVVV), and 401–421 (FVIYSGYFALVASIFAFFFMI).

This sequence belongs to the reduced folate carrier (RFC) transporter (TC 2.A.48) family. Highly expressed in pharynx and posterior part of the intestine. Expressed at lower levels in the body wall muscles, head muscles, and vulva muscles. Highly expressed in the intestine of the early larva, levels decrease in the later stages of development.

It is found in the membrane. In terms of biological role, folate transporter. The sequence is that of Folate transporter 1 (folt-1) from Caenorhabditis elegans.